A 187-amino-acid chain; its full sequence is MGHETMTPATTTLVFTYGTLKRGFSNHVLMQDLIRSGDASFKGVYQTLDKYPLVCGPYRVPFLLNKPGSGYHVNGELYAVSPRGLSRLDELEGISRGHYIRQPIRLAAAEEEEEEEGDLETEAPSSCVVEAYYAHKSYEEELWRRNRGRSFGAYTENEARGYVKRNDRPQHLSFLDHIRIFVSSPCD.

Substrate is bound at residue 17–20; it reads YGTL. The active-site Proton acceptor is E92.

The protein belongs to the gamma-glutamylcyclotransferase family.

Functionally, putative gamma-glutamylcyclotransferase. This Arabidopsis thaliana (Mouse-ear cress) protein is Putative gamma-glutamylcyclotransferase At3g02910.